The primary structure comprises 290 residues: Phosphoribosylaminoimidazole-succinocarboxamide synthase (290 aa).

It belongs to the SAICAR synthetase family.

It catalyses the reaction 5-amino-1-(5-phospho-D-ribosyl)imidazole-4-carboxylate + L-aspartate + ATP = (2S)-2-[5-amino-1-(5-phospho-beta-D-ribosyl)imidazole-4-carboxamido]succinate + ADP + phosphate + 2 H(+). The protein operates within purine metabolism; IMP biosynthesis via de novo pathway; 5-amino-1-(5-phospho-D-ribosyl)imidazole-4-carboxamide from 5-amino-1-(5-phospho-D-ribosyl)imidazole-4-carboxylate: step 1/2. The chain is Phosphoribosylaminoimidazole-succinocarboxamide synthase (purC) from Haemophilus influenzae (strain ATCC 51907 / DSM 11121 / KW20 / Rd).